The primary structure comprises 505 residues: Deoxyguanosinetriphosphate triphosphohydrolase (505 aa).

The HD domain occupies 66–273 (RLTHSMEVQQ…MEAADDISYC (208 aa)).

It belongs to the dGTPase family. Type 1 subfamily. In terms of assembly, homotetramer. The cofactor is Mg(2+).

The enzyme catalyses dGTP + H2O = 2'-deoxyguanosine + triphosphate + H(+). DGTPase preferentially hydrolyzes dGTP over the other canonical NTPs. This Escherichia coli O139:H28 (strain E24377A / ETEC) protein is Deoxyguanosinetriphosphate triphosphohydrolase.